Consider the following 205-residue polypeptide: SREBP regulating gene protein (205 aa).

Topologically, residues 1-16 are cytoplasmic; that stretch reads MVNLAAMVWRRLLRKR. Residues 17 to 35 form a helical membrane-spanning segment; sequence WVLALVFGLSLVYFLTSTF. Topologically, residues 36–205 are lumenal; it reads KQEERAVRDR…GESPPELFPA (170 aa). Asn-67 is a glycosylation site (N-linked (GlcNAc...) asparagine).

This sequence belongs to the SPRING family. As to quaternary structure, interacts with SCAP.

Its subcellular location is the golgi apparatus membrane. Its function is as follows. Positively regulates hepatic SREBP signaling pathway by modulating the proper localization of SCAP (SREBP cleavage-activating protein) to the endoplasmic reticulum, thereby controlling the level of functional SCAP. This chain is SREBP regulating gene protein, found in Bos taurus (Bovine).